The primary structure comprises 75 residues: Putative defensin-like protein 55 (75 aa).

An N-terminal signal peptide occupies residues 1–19 (MNITKAYVIFFLVVILTNS). 4 disulfides stabilise this stretch: cysteine 39-cysteine 73, cysteine 43-cysteine 66, cysteine 52-cysteine 71, and cysteine 56-cysteine 72.

This sequence belongs to the DEFL family.

The protein localises to the secreted. This chain is Putative defensin-like protein 55, found in Arabidopsis thaliana (Mouse-ear cress).